The primary structure comprises 1338 residues: Fanconi anemia group I protein (1338 aa).

A Glycyl lysine isopeptide (Lys-Gly) (interchain with G-Cter in ubiquitin) cross-link involves residue Lys-525. Residues Ser-558 and Ser-561 each carry the phosphoserine modification. At Thr-567 the chain carries Phosphothreonine.

This sequence belongs to the Fanconi anemia group I protein family. Homodimer. Part of a FANCI-FANCD2 heterodimeric complex that binds and scans dsDNA for DNA damage. Interacts with FANCL. Interacts with MTMR15/FAN1. Interacts with POLN. Interacts with UBL5; the interaction promotes FANCI homodimerization. Monoubiquitinated by FANCL during S phase and upon genotoxic stress. Deubiquitinated by USP1 as cells enter G2/M, or once DNA repair is completed. Monoubiquitination requires the FANCA-FANCB-FANCC-FANCE-FANCF-FANCG-FANCM complex. Ubiquitination is required for binding to chromatin, DNA repair, and normal cell cycle progression. Monoubiquitination is stimulated by DNA-binding. Post-translationally, phosphorylated in response to DNA damage by ATM and/or ATR. Phosphorylation of FANCI promotes ubiquitination of FANCD2, which prevents DNA release from the FANCI-FANCD2 complex.

Functionally, plays an essential role in the repair of DNA double-strand breaks by homologous recombination and in the repair of interstrand DNA cross-links (ICLs) by promoting FANCD2 monoubiquitination by FANCL and participating in recruitment to DNA repair sites. The FANCI-FANCD2 complex binds and scans double-stranded DNA (dsDNA) for DNA damage; this complex stalls at DNA junctions between double-stranded DNA and single-stranded DNA. Participates in S phase and G2 phase checkpoint activation upon DNA damage. The polypeptide is Fanconi anemia group I protein (Gallus gallus (Chicken)).